Here is a 255-residue protein sequence, read N- to C-terminus: Tablysin 15 (255 aa).

The first 23 residues, 1-23 (MTSIPVSSFLLAALVLQYATSDA), serve as a signal peptide directing secretion. Intrachain disulfides connect C27–C40, C31–C117, and C49–C110. The Cell attachment site signature appears at 32-34 (RGD). Residues 67–211 (LSKINDVRDH…KARALLTCNF (145 aa)) enclose the SCP domain. Residues W82, H153, and K156 each contribute to the leukotriene E4 site. 2 cysteine pairs are disulfide-bonded: C192–C209 and C232–C243.

It belongs to the CRISP family. In terms of tissue distribution, expressed in salivary glands.

It is found in the secreted. Its function is as follows. Anti-inflammatory scavenger of eicosanoids and antithrombotic protein that inhibits platelets aggregation induced by collagen, ADP and convulxin (GPVI agonist). Exhibits high affinity binding for glycoprotein IIb-IIIa receptor (ITGA2B/ITGB3) and endothelial cell alphaVbeta3 (ITGAV/ITGB3) integrins, but not for alpha-5/beta-1 or alpha-2/beta-1. Accordingly, it blocks endothelial cell adhesion to vitronectin (IC(50)~1 nM) and marginally to fibronectin (IC(50)~1 uM), but not to collagen. It also inhibits fibroblast growth factor (FGF)-induced endothelial cell proliferation, and attenuates tube formation in vitro. In addition, it dose-dependently attenuates thrombus formation to collagen under flow. Also binds proinflammatory cysteinyl leukotrienes (leukotrienes C4 (LTC4), D4 (LTD4) and E4 (LTE4)) with submicromolar affinities. In Tabanus yao (Horsefly), this protein is Tablysin 15.